The following is a 347-amino-acid chain: Suppressor of RNA-mediated gene silencing (347 aa).

The protein belongs to the phytoreovirus non-structural protein 10 family.

In terms of biological role, suppressor of RNA-mediated gene silencing, also known as post-transcriptional gene silencing (PTGS), a mechanism of plant viral defense that limits the accumulation of viral RNAs. This is Suppressor of RNA-mediated gene silencing from Catharanthus roseus (Madagascar periwinkle).